The chain runs to 276 residues: Large ribosomal subunit protein uL2 (276 aa).

Residues 224–265 (VMNPVDHPHGGGEGRTASGRHPVSPWGLPTKGYKTRNNKRTD) are disordered.

Belongs to the universal ribosomal protein uL2 family. In terms of assembly, part of the 50S ribosomal subunit. Forms a bridge to the 30S subunit in the 70S ribosome.

One of the primary rRNA binding proteins. Required for association of the 30S and 50S subunits to form the 70S ribosome, for tRNA binding and peptide bond formation. It has been suggested to have peptidyltransferase activity; this is somewhat controversial. Makes several contacts with the 16S rRNA in the 70S ribosome. This chain is Large ribosomal subunit protein uL2, found in Dichelobacter nodosus (strain VCS1703A).